The chain runs to 301 residues: MKLEGVIVATVMPFAKDGVNYEGLRLLLSKIVEAGYHGVFPTSSTGEVTKLSAEERVRVMQLAKEVAGGKALVVAGTGTGDHVSTIDIARKYKDVGVDAILITPPYYIQYDWAALYAFYKKVLDKVDIPVILYTIPLATGYNVPVEVFEMVAGEYSQVVGVKDSSGDFRYHLDLIHLLGKRLSVLQGLDMLFVPSLVMGAHGGILAGPNFLGRITLEQYLLVKEGKIAEAVALHNKLMPLWRFMGGCGLVGKLGGKWPTLYKLATQLVHGIDMGPPREPLPPVDDKDRRELEKILKELGLI.

Catalysis depends on charge relay system residues Ser44 and Tyr107. The active-site Proton donor is Tyr133. Residue Lys162 is the Schiff-base intermediate with substrate of the active site.

Belongs to the DapA family. Homotetramer.

Its subcellular location is the cytoplasm. This is an uncharacterized protein from Pyrobaculum aerophilum (strain ATCC 51768 / DSM 7523 / JCM 9630 / CIP 104966 / NBRC 100827 / IM2).